A 462-amino-acid polypeptide reads, in one-letter code: ATP synthase subunit beta (462 aa).

Position 151–158 (151–158 (GGAGVGKT)) interacts with ATP.

This sequence belongs to the ATPase alpha/beta chains family. F-type ATPases have 2 components, CF(1) - the catalytic core - and CF(0) - the membrane proton channel. CF(1) has five subunits: alpha(3), beta(3), gamma(1), delta(1), epsilon(1). CF(0) has four main subunits: a(1), b(1), b'(1) and c(9-12).

Its subcellular location is the cell inner membrane. The enzyme catalyses ATP + H2O + 4 H(+)(in) = ADP + phosphate + 5 H(+)(out). In terms of biological role, produces ATP from ADP in the presence of a proton gradient across the membrane. The catalytic sites are hosted primarily by the beta subunits. In Chlorobium phaeovibrioides (strain DSM 265 / 1930) (Prosthecochloris vibrioformis (strain DSM 265)), this protein is ATP synthase subunit beta.